A 340-amino-acid chain; its full sequence is tRNA N6-adenosine threonylcarbamoyltransferase (340 aa).

Residues H115 and H119 each contribute to the Fe cation site. Residues 137 to 141, D170, G183, D187, and N276 contribute to the substrate site; that span reads IVSGG. Residue D304 participates in Fe cation binding.

It belongs to the KAE1 / TsaD family. The cofactor is Fe(2+).

The protein localises to the cytoplasm. It carries out the reaction L-threonylcarbamoyladenylate + adenosine(37) in tRNA = N(6)-L-threonylcarbamoyladenosine(37) in tRNA + AMP + H(+). Functionally, required for the formation of a threonylcarbamoyl group on adenosine at position 37 (t(6)A37) in tRNAs that read codons beginning with adenine. Is involved in the transfer of the threonylcarbamoyl moiety of threonylcarbamoyl-AMP (TC-AMP) to the N6 group of A37, together with TsaE and TsaB. TsaD likely plays a direct catalytic role in this reaction. This chain is tRNA N6-adenosine threonylcarbamoyltransferase, found in Staphylococcus epidermidis (strain ATCC 35984 / DSM 28319 / BCRC 17069 / CCUG 31568 / BM 3577 / RP62A).